A 332-amino-acid polypeptide reads, in one-letter code: Glyceraldehyde-3-phosphate dehydrogenase 3 (332 aa).

Positions 11, 12, and 33 each coordinate NAD(+). Residues K46 and K63 each participate in a glycyl lysine isopeptide (Lys-Gly) (interchain with G-Cter in ubiquitin) cross-link. An NAD(+)-binding site is contributed by T120. 149 to 151 (SCT) is a D-glyceraldehyde 3-phosphate binding site. The active-site Nucleophile is the C150. Cysteine persulfide is present on residues C150 and C154. Residue K160 forms a Glycyl lysine isopeptide (Lys-Gly) (interchain with G-Cter in URM1) linkage. D-glyceraldehyde 3-phosphate is bound by residues T180, 209 to 210 (TG), and R232. A Phosphoserine modification is found at S302. A Glycyl lysine isopeptide (Lys-Gly) (interchain with G-Cter in URM1) cross-link involves residue K307. NAD(+) is bound by residues N314 and Y318.

This sequence belongs to the glyceraldehyde-3-phosphate dehydrogenase family. Homotetramer. Conjugated to URM1, a ubiquitin-like protein, in response to oxidative stresses. The attachment of URM1 to lysine residues exclusively depends on the presence of a peroxidatic cysteine in the target protein, with low specificity for the particular residue, motif, or structural context at which urmylation can occur. The URM1-conjugation reaction is mechanistically and directly coupled to the process of cysteine persulfidation, transfering the sulfur atom of the URM1 thiocarboxyl group to redox-active cysteine residues in the target protein if it is exposed to oxidative conditions. Post-translationally, persulfidated on specific redox-active cysteine residues. Persulfidation (also called protein S-sulfhydration) may provide a molecular mechanism that enables cells to protect vulnerable cysteine residues from reactive oxygen species (ROS) under stress conditions.

The protein localises to the cytoplasm. Its subcellular location is the mitochondrion. The catalysed reaction is D-glyceraldehyde 3-phosphate + phosphate + NAD(+) = (2R)-3-phospho-glyceroyl phosphate + NADH + H(+). It carries out the reaction NADH + H2O = (6R)-NADHX. The enzyme catalyses NADH + H2O = (6S)-NADHX. It catalyses the reaction NADPH + H2O = (6R)-NADPHX. The catalysed reaction is NADPH + H2O = (6S)-NADPHX. It participates in carbohydrate degradation; glycolysis; pyruvate from D-glyceraldehyde 3-phosphate: step 1/5. In terms of biological role, glyceraldehyde-3-phosphate dehydrogenase (GAPDH) involved in glycolysis and gluconeogenesis. Catalyzes the reaction of glyceraldehyde-3-phosphate to 1,3 bis-phosphoglycerate. The contribution of the TDH1, TDH2, and TDH3 to the total glyceraldehyde-3-phosphate dehydrogenase activity is 10-15, 25-30, and 50-60%, respectively. Functionally, as a side activity, catalyzes the hydration of the nicotinamide ring of NADH or NADPH at the C6 position to give the corresponding hydrates, NADHX and NADPHX, which exist as R and S epimers, that cannot act as electron donors or acceptors and inhibit several dehydrogenases, making them toxic. This chain is Glyceraldehyde-3-phosphate dehydrogenase 3, found in Saccharomyces cerevisiae (strain ATCC 204508 / S288c) (Baker's yeast).